Reading from the N-terminus, the 678-residue chain is DNA ligase (678 aa).

NAD(+) is bound by residues 36 to 40, 85 to 86, and glutamate 117; these read DSEFD and SL. The active-site N6-AMP-lysine intermediate is the lysine 119. Residues arginine 140, glutamate 177, lysine 294, and lysine 318 each contribute to the NAD(+) site. Residues cysteine 412, cysteine 415, cysteine 430, and cysteine 436 each contribute to the Zn(2+) site. Positions 595 to 678 constitute a BRCT domain; it reads IIDAPLLGKT…TWWQHYGNAV (84 aa).

This sequence belongs to the NAD-dependent DNA ligase family. LigA subfamily. Requires Mg(2+) as cofactor. It depends on Mn(2+) as a cofactor.

The enzyme catalyses NAD(+) + (deoxyribonucleotide)n-3'-hydroxyl + 5'-phospho-(deoxyribonucleotide)m = (deoxyribonucleotide)n+m + AMP + beta-nicotinamide D-nucleotide.. Its function is as follows. DNA ligase that catalyzes the formation of phosphodiester linkages between 5'-phosphoryl and 3'-hydroxyl groups in double-stranded DNA using NAD as a coenzyme and as the energy source for the reaction. It is essential for DNA replication and repair of damaged DNA. This is DNA ligase from Dichelobacter nodosus (strain VCS1703A).